A 189-amino-acid chain; its full sequence is Ornithine decarboxylase antizyme 2 (189 aa).

S186 is modified (phosphoserine).

It belongs to the ODC antizyme family. As to quaternary structure, interacts with ODC1 and thereby sterically blocks ODC homodimerization. Interacts with AZIN2; this interaction disrupts the interaction between the antizyme and ODC1.

It is found in the nucleus. Its function is as follows. Ornithine decarboxylase (ODC) antizyme protein that negatively regulates ODC activity and intracellular polyamine biosynthesis and uptake in response to increased intracellular polyamine levels. Binds to ODC monomers, inhibiting the assembly of the functional ODC homodimers. Does not target the ODC monomers for degradation, which allows a protein synthesis-independent restoration of ODC activity. Involved in the translocation of AZIN2 from ER-Golgi intermediate compartment (ERGIC) to the cytosol. This chain is Ornithine decarboxylase antizyme 2 (OAZ2), found in Homo sapiens (Human).